Reading from the N-terminus, the 162-residue chain is uncharacterized protein (162 aa).

The next 4 membrane-spanning stretches (helical) occupy residues 10–30 (ILSF…MLIL), 50–70 (IVEL…ALYN), 96–116 (IAQY…IILL), and 125–145 (FTAI…LFIF).

The protein localises to the cell membrane. This is an uncharacterized protein from Methanocaldococcus jannaschii (strain ATCC 43067 / DSM 2661 / JAL-1 / JCM 10045 / NBRC 100440) (Methanococcus jannaschii).